A 268-amino-acid chain; its full sequence is Energy-coupling factor transporter transmembrane protein EcfT (268 aa).

Transmembrane regions (helical) follow at residues 29–49 (VFIF…TVAV), 75–95 (IIIV…EVIV), 107–127 (LIEG…ASLL), 152–172 (LPTH…PTLI), and 242–262 (WGLK…AVMA).

The protein belongs to the energy-coupling factor EcfT family. As to quaternary structure, forms a stable energy-coupling factor (ECF) transporter complex composed of 2 membrane-embedded substrate-binding proteins (S component), 2 ATP-binding proteins (A component) and 2 transmembrane proteins (T component). May be able to interact with more than 1 S component at a time.

The protein localises to the cell membrane. Its function is as follows. Transmembrane (T) component of an energy-coupling factor (ECF) ABC-transporter complex. Unlike classic ABC transporters this ECF transporter provides the energy necessary to transport a number of different substrates. This is Energy-coupling factor transporter transmembrane protein EcfT from Bacillus selenitireducens (strain ATCC 700615 / DSM 15326 / MLS10).